A 424-amino-acid polypeptide reads, in one-letter code: UPF0415 protein C7orf25 homolog (424 aa).

This sequence belongs to the UPF0415 family.

The sequence is that of UPF0415 protein C7orf25 homolog from Xenopus laevis (African clawed frog).